A 358-amino-acid chain; its full sequence is Peptide chain release factor 1 (358 aa).

Position 232 is an N5-methylglutamine (glutamine 232).

This sequence belongs to the prokaryotic/mitochondrial release factor family. In terms of processing, methylated by PrmC. Methylation increases the termination efficiency of RF1.

Its subcellular location is the cytoplasm. Its function is as follows. Peptide chain release factor 1 directs the termination of translation in response to the peptide chain termination codons UAG and UAA. The chain is Peptide chain release factor 1 from Acidobacterium capsulatum (strain ATCC 51196 / DSM 11244 / BCRC 80197 / JCM 7670 / NBRC 15755 / NCIMB 13165 / 161).